The primary structure comprises 272 residues: Phosphatidylglycerol--prolipoprotein diacylglyceryl transferase (272 aa).

The next 4 membrane-spanning stretches (helical) occupy residues 16–36 (VGLH…LSSF), 62–82 (FALG…VLFY), 97–117 (IWKG…WAAV), and 129–149 (LSVT…ALLI). Arg150 lines the a 1,2-diacyl-sn-glycero-3-phospho-(1'-sn-glycerol) pocket. 2 consecutive transmembrane segments (helical) span residues 206-226 (GVIR…VAVI) and 246-266 (ILTI…GIIW).

It belongs to the Lgt family.

Its subcellular location is the cell inner membrane. It catalyses the reaction L-cysteinyl-[prolipoprotein] + a 1,2-diacyl-sn-glycero-3-phospho-(1'-sn-glycerol) = an S-1,2-diacyl-sn-glyceryl-L-cysteinyl-[prolipoprotein] + sn-glycerol 1-phosphate + H(+). The protein operates within protein modification; lipoprotein biosynthesis (diacylglyceryl transfer). Functionally, catalyzes the transfer of the diacylglyceryl group from phosphatidylglycerol to the sulfhydryl group of the N-terminal cysteine of a prolipoprotein, the first step in the formation of mature lipoproteins. This is Phosphatidylglycerol--prolipoprotein diacylglyceryl transferase from Chlamydia trachomatis serovar D (strain ATCC VR-885 / DSM 19411 / UW-3/Cx).